The primary structure comprises 347 residues: Iron-sulfur cluster assembly protein SufC (347 aa).

Residues 100–346 (LEIKDLHAIE…ENKGYSQFLK (247 aa)) enclose the ABC transporter domain. 134 to 141 (GRNGSGKS) lines the ATP pocket.

Belongs to the ABC transporter superfamily. Ycf16 family. As to quaternary structure, component of a complex composed of SufB, SufC and SufD in a stoichiometric ratio of 1:2:1. Interacts with SufB. Interacts with SufD; the interaction enhances the ATPase activity of SufC. In terms of processing, proteolytically cleaved.

It is found in the plastid. It localises to the apicoplast. It catalyses the reaction ATP + H2O = ADP + phosphate + H(+). Its pathway is cofactor biosynthesis; iron-sulfur cluster biosynthesis. In terms of biological role, participates in the sulfur mobilization (SUF) pathway for iron-sulfur (Fe-S) cluster biogenesis. As part of a complex consisting of SufB-SufC(2)-SufD, involved in assembly of [4Fe-4S] clusters. Exhibits ATPase activity. This chain is Iron-sulfur cluster assembly protein SufC, found in Plasmodium falciparum (isolate 3D7).